The primary structure comprises 1083 residues: Error-prone DNA polymerase (1083 aa).

Belongs to the DNA polymerase type-C family. DnaE2 subfamily.

It localises to the cytoplasm. It carries out the reaction DNA(n) + a 2'-deoxyribonucleoside 5'-triphosphate = DNA(n+1) + diphosphate. Its function is as follows. DNA polymerase involved in damage-induced mutagenesis and translesion synthesis (TLS). It is not the major replicative DNA polymerase. This chain is Error-prone DNA polymerase, found in Xanthomonas axonopodis pv. citri (strain 306).